A 564-amino-acid chain; its full sequence is Glutamyl-tRNA(Gln) amidotransferase subunit B, mitochondrial (564 aa).

The transit peptide at 1 to 88 directs the protein to the mitochondrion; sequence MIRQCVSHRG…DTDAKLFSRA (88 aa). A disordered region spans residues 26–63; the sequence is PFHHPSPRPLGRKNWSTSDEAKSKRAAMRKGGAPPPEH.

It belongs to the GatB/GatE family. GatB subfamily. Subunit of the heterotrimeric GatCAB amidotransferase (AdT) complex, composed of A, B and C subunits.

The protein resides in the mitochondrion. The enzyme catalyses L-glutamyl-tRNA(Gln) + L-glutamine + ATP + H2O = L-glutaminyl-tRNA(Gln) + L-glutamate + ADP + phosphate + H(+). Allows the formation of correctly charged Gln-tRNA(Gln) through the transamidation of misacylated Glu-tRNA(Gln) in the mitochondria. The reaction takes place in the presence of glutamine and ATP through an activated gamma-phospho-Glu-tRNA(Gln). In Ajellomyces capsulatus (strain G186AR / H82 / ATCC MYA-2454 / RMSCC 2432) (Darling's disease fungus), this protein is Glutamyl-tRNA(Gln) amidotransferase subunit B, mitochondrial.